Consider the following 268-residue polypeptide: Protein limb expression 1 homolog (268 aa).

Belongs to the LIX1 family. As to quaternary structure, interacts with ft (via intracellular domain) and ds (via intracellular domain).

It localises to the apical cell membrane. Its subcellular location is the cytoplasm. Functionally, component of the Fat (ft) signaling pathway that functions in normal development of various organs such as the wing and leg. In developing imaginal disks, involved in regulating both the protein levels and apical localization of ft and ds. Involved in establishing planar cell polarity (PCP) along the anterior-posterior axis of the wing (the early Fz signaling event), probably by acting upstream of ds and ft to regulate Fz activity. This Drosophila melanogaster (Fruit fly) protein is Protein limb expression 1 homolog.